Here is an 85-residue protein sequence, read N- to C-terminus: Phosphocarrier protein HPr (85 aa).

In terms of domain architecture, HPr spans 1–85 (MFQQEVTITA…HLVKLMAELE (85 aa)). Histidine 15 (pros-phosphohistidine intermediate) is an active-site residue.

Its subcellular location is the cytoplasm. Its function is as follows. General (non sugar-specific) component of the phosphoenolpyruvate-dependent sugar phosphotransferase system (sugar PTS). This major carbohydrate active-transport system catalyzes the phosphorylation of incoming sugar substrates concomitantly with their translocation across the cell membrane. The phosphoryl group from phosphoenolpyruvate (PEP) is transferred to the phosphoryl carrier protein HPr by enzyme I. Phospho-HPr then transfers it to the PTS EIIA domain. The chain is Phosphocarrier protein HPr (ptsH) from Klebsiella pneumoniae.